The following is a 983-amino-acid chain: Protein translocase subunit SecA (983 aa).

ATP-binding positions include glutamine 83, 101 to 105 (GEGKT), and aspartate 489. The interval 948 to 983 (ISSEEEDNNEKTNINNNEDLERTKGEAQQTAKNPNE) is disordered. The segment covering 973-983 (EAQQTAKNPNE) has biased composition (polar residues).

Belongs to the SecA family. As to quaternary structure, monomer and homodimer. Part of the essential Sec protein translocation apparatus which comprises SecA, SecYEG and auxiliary proteins SecDF. Other proteins may also be involved.

It localises to the cell membrane. The protein localises to the cytoplasm. The enzyme catalyses ATP + H2O + cellular proteinSide 1 = ADP + phosphate + cellular proteinSide 2.. Functionally, part of the Sec protein translocase complex. Interacts with the SecYEG preprotein conducting channel. Has a central role in coupling the hydrolysis of ATP to the transfer of proteins into and across the cell membrane, serving as an ATP-driven molecular motor driving the stepwise translocation of polypeptide chains across the membrane. The chain is Protein translocase subunit SecA from Mesomycoplasma hyopneumoniae (strain 232) (Mycoplasma hyopneumoniae).